The chain runs to 374 residues: DNA replication and repair protein RecF (374 aa).

An ATP-binding site is contributed by 30 to 37 (GENAQGKT).

Belongs to the RecF family.

Its subcellular location is the cytoplasm. Functionally, the RecF protein is involved in DNA metabolism; it is required for DNA replication and normal SOS inducibility. RecF binds preferentially to single-stranded, linear DNA. It also seems to bind ATP. This chain is DNA replication and repair protein RecF, found in Geobacillus sp. (strain WCH70).